Consider the following 158-residue polypeptide: Transcription elongation factor GreA (158 aa).

Residues 3-75 (TEKTYPMTQE…TQLENMIRNA (73 aa)) are a coiled coil.

Belongs to the GreA/GreB family.

Functionally, necessary for efficient RNA polymerase transcription elongation past template-encoded arresting sites. The arresting sites in DNA have the property of trapping a certain fraction of elongating RNA polymerases that pass through, resulting in locked ternary complexes. Cleavage of the nascent transcript by cleavage factors such as GreA or GreB allows the resumption of elongation from the new 3'terminus. GreA releases sequences of 2 to 3 nucleotides. The polypeptide is Transcription elongation factor GreA (Bacillus cereus (strain ATCC 14579 / DSM 31 / CCUG 7414 / JCM 2152 / NBRC 15305 / NCIMB 9373 / NCTC 2599 / NRRL B-3711)).